A 213-amino-acid polypeptide reads, in one-letter code: MKGILGKKVGMTRVFKDDKAIPVTVIKAGPCVVVQKKTVETDGYNAIQIGFEEIPERKANKPLMGHFKKAQVKPLRYLREFRVENVDDYEIGQKIDVTIFSEGEKIDLIGNSKGRGYSGVMKRWNFRGGENTHGSKFHRGLGSTGMATFPSKVFKGKKMPGQYGNERVTIQNSEVVYIDVQNNLIAVKGGVPGARGGLVTIREAVKAKRPKTK.

The protein belongs to the universal ribosomal protein uL3 family. Part of the 50S ribosomal subunit. Forms a cluster with proteins L14 and L19.

One of the primary rRNA binding proteins, it binds directly near the 3'-end of the 23S rRNA, where it nucleates assembly of the 50S subunit. The sequence is that of Large ribosomal subunit protein uL3 from Petrotoga mobilis (strain DSM 10674 / SJ95).